We begin with the raw amino-acid sequence, 367 residues long: Chorismate synthase (367 aa).

Positions 48 and 54 each coordinate NADP(+). Residues 125-127 (RSS), 238-239 (NA), Gly-278, 293-297 (KPTSS), and Arg-319 each bind FMN.

It belongs to the chorismate synthase family. In terms of assembly, homotetramer. FMNH2 serves as cofactor.

The enzyme catalyses 5-O-(1-carboxyvinyl)-3-phosphoshikimate = chorismate + phosphate. Its pathway is metabolic intermediate biosynthesis; chorismate biosynthesis; chorismate from D-erythrose 4-phosphate and phosphoenolpyruvate: step 7/7. In terms of biological role, catalyzes the anti-1,4-elimination of the C-3 phosphate and the C-6 proR hydrogen from 5-enolpyruvylshikimate-3-phosphate (EPSP) to yield chorismate, which is the branch point compound that serves as the starting substrate for the three terminal pathways of aromatic amino acid biosynthesis. This reaction introduces a second double bond into the aromatic ring system. The sequence is that of Chorismate synthase from Xanthomonas campestris pv. campestris (strain 8004).